Consider the following 308-residue polypeptide: Protein translocase subunit SecF (308 aa).

6 helical membrane-spanning segments follow: residues 18 to 38 (AYVFSGVLILLSLVSLVTRGL), 134 to 154 (GAIYSILGALLVIFVYILIRF), 160 to 180 (LGAVVALFHDVLITLGLFSLL), 193 to 213 (TIIAAFLTIVGYSLNDTVVVF), 244 to 264 (IITSGTTLLVVVILFIFGGEV), and 272 to 292 (LIVGIVIGTYSSIFVASPVVI).

The protein belongs to the SecD/SecF family. SecF subfamily. Forms a complex with SecD. Part of the essential Sec protein translocation apparatus which comprises SecA, SecYEG and auxiliary proteins SecDF. Other proteins may also be involved.

The protein localises to the cell inner membrane. In terms of biological role, part of the Sec protein translocase complex. Interacts with the SecYEG preprotein conducting channel. SecDF uses the proton motive force (PMF) to complete protein translocation after the ATP-dependent function of SecA. This chain is Protein translocase subunit SecF, found in Rhodothermus marinus (strain ATCC 43812 / DSM 4252 / R-10) (Rhodothermus obamensis).